Reading from the N-terminus, the 90-residue chain is Probable Fe(2+)-trafficking protein (90 aa).

The protein belongs to the Fe(2+)-trafficking protein family.

Could be a mediator in iron transactions between iron acquisition and iron-requiring processes, such as synthesis and/or repair of Fe-S clusters in biosynthetic enzymes. The chain is Probable Fe(2+)-trafficking protein from Paracidovorax citrulli (strain AAC00-1) (Acidovorax citrulli).